We begin with the raw amino-acid sequence, 130 residues long: Anti-adapter protein IraD (130 aa).

Belongs to the GpW/Gp25 family. IraD subfamily. In terms of assembly, interacts with RssB.

The protein localises to the cytoplasm. Inhibits RpoS proteolysis by regulating RssB activity, thereby increasing the stability of the sigma stress factor RpoS during oxidative stress. Its effect on RpoS stability is due to its interaction with RssB, which probably blocks the interaction of RssB with RpoS, and the consequent delivery of the RssB-RpoS complex to the ClpXP protein degradation pathway. The chain is Anti-adapter protein IraD from Escherichia coli O45:K1 (strain S88 / ExPEC).